The following is a 178-amino-acid chain: Translation initiation factor IF-3 (178 aa).

This sequence belongs to the IF-3 family. In terms of assembly, monomer.

The protein localises to the cytoplasm. Its function is as follows. IF-3 binds to the 30S ribosomal subunit and shifts the equilibrium between 70S ribosomes and their 50S and 30S subunits in favor of the free subunits, thus enhancing the availability of 30S subunits on which protein synthesis initiation begins. This Macrococcus caseolyticus (strain JCSC5402) (Macrococcoides caseolyticum) protein is Translation initiation factor IF-3.